We begin with the raw amino-acid sequence, 121 residues long: Large ribosomal subunit protein uL14c (121 aa).

This sequence belongs to the universal ribosomal protein uL14 family. In terms of assembly, part of the 50S ribosomal subunit.

The protein localises to the plastid. It is found in the chloroplast. In terms of biological role, binds to 23S rRNA. This chain is Large ribosomal subunit protein uL14c, found in Guillardia theta (Cryptophyte).